The primary structure comprises 382 residues: 6-oxocyclohex-1-ene-1-carbonyl-CoA hydrolase (382 aa).

The protein belongs to the enoyl-CoA hydratase/isomerase family. Homohexamer.

The enzyme catalyses 6-oxocyclohex-1-ene-1-carbonyl-CoA + 2 H2O = 3-hydroxy-6-carboxyhexanoyl-CoA + H(+). Its pathway is aromatic compound metabolism; benzoyl-CoA degradation. Functionally, involved in the central benzoyl-CoA catabolism. Catalyzes the addition of one molecule of water to the double bond and the hydrolytic cleavage of C-C bond in the alicyclic ring, 6-oxocyclohex-1-ene-1-carbonyl-CoA (6-OCH-CoA) to yield 3-hydroxypimelyl-CoA. This Syntrophus aciditrophicus (strain SB) protein is 6-oxocyclohex-1-ene-1-carbonyl-CoA hydrolase.